Here is a 152-residue protein sequence, read N- to C-terminus: 2-C-methyl-D-erythritol 2,4-cyclodiphosphate synthase (152 aa).

The a divalent metal cation site is built by Asp8 and His10. 4-CDP-2-C-methyl-D-erythritol 2-phosphate-binding positions include Asp8–His10 and His34–Ser35. Residue His42 participates in a divalent metal cation binding. Residues Asp56–Gly58 and Phe61–Asp65 contribute to the 4-CDP-2-C-methyl-D-erythritol 2-phosphate site.

It belongs to the IspF family. As to quaternary structure, homotrimer. Requires a divalent metal cation as cofactor.

It carries out the reaction 4-CDP-2-C-methyl-D-erythritol 2-phosphate = 2-C-methyl-D-erythritol 2,4-cyclic diphosphate + CMP. It participates in isoprenoid biosynthesis; isopentenyl diphosphate biosynthesis via DXP pathway; isopentenyl diphosphate from 1-deoxy-D-xylulose 5-phosphate: step 4/6. Its function is as follows. Involved in the biosynthesis of isopentenyl diphosphate (IPP) and dimethylallyl diphosphate (DMAPP), two major building blocks of isoprenoid compounds. Catalyzes the conversion of 4-diphosphocytidyl-2-C-methyl-D-erythritol 2-phosphate (CDP-ME2P) to 2-C-methyl-D-erythritol 2,4-cyclodiphosphate (ME-CPP) with a corresponding release of cytidine 5-monophosphate (CMP). This is 2-C-methyl-D-erythritol 2,4-cyclodiphosphate synthase from Thermus thermophilus (strain ATCC BAA-163 / DSM 7039 / HB27).